The sequence spans 634 residues: Probable threonine--tRNA ligase, cytoplasmic (634 aa).

The TGS domain maps to 1 to 61; sequence MSIYVTFKGQ…NENQKIELYD (61 aa).

It belongs to the class-II aminoacyl-tRNA synthetase family.

It is found in the cytoplasm. It carries out the reaction tRNA(Thr) + L-threonine + ATP = L-threonyl-tRNA(Thr) + AMP + diphosphate + H(+). The chain is Probable threonine--tRNA ligase, cytoplasmic from Enterocytozoon bieneusi (strain H348) (Microsporidian parasite).